A 158-amino-acid chain; its full sequence is UPF0336 protein Mb0654 (158 aa).

Belongs to the UPF0336 family.

This is UPF0336 protein Mb0654 from Mycobacterium bovis (strain ATCC BAA-935 / AF2122/97).